We begin with the raw amino-acid sequence, 306 residues long: Probable rRNA-processing protein EBP2 (306 aa).

Methionine 1 carries the post-translational modification N-acetylmethionine. Disordered regions lie at residues methionine 1–aspartate 20 and valine 77–glutamate 99. Threonine 3 is subject to Phosphothreonine. 5 positions are modified to phosphoserine: serine 7, serine 9, serine 11, serine 13, and serine 16. A Glycyl lysine isopeptide (Lys-Gly) (interchain with G-Cter in SUMO2) cross-link involves residue lysine 94. A coiled-coil region spans residues alanine 138–glutamine 169. Residues lysine 179 and lysine 218 each participate in a glycyl lysine isopeptide (Lys-Gly) (interchain with G-Cter in SUMO2) cross-link. Residues leucine 213–histidine 306 are disordered. Serine 264 and serine 270 each carry phosphoserine. The segment covering lysine 274 to histidine 306 has biased composition (basic residues).

The protein belongs to the EBP2 family. As to quaternary structure, specifically interacts with EBV EBNA1. The EBNA1-EBP2 interaction is important for the stable segregation of EBV episomes during cell division. Interacts with WDR46. Ubiquitous.

It localises to the nucleus. Its subcellular location is the nucleolus. Its function is as follows. Required for the processing of the 27S pre-rRNA. This chain is Probable rRNA-processing protein EBP2 (EBNA1BP2), found in Homo sapiens (Human).